A 320-amino-acid chain; its full sequence is Pyrroline-5-carboxylate reductase 1, mitochondrial (320 aa).

Residue Ser2 is modified to N-acetylserine. NADP(+) is bound by residues 6–11 (IGAGQL) and Ser34. Positions 8, 10, 11, 34, 36, 56, 70, 71, and 97 each coordinate NADPH. Residues Asn56, 69-72 (AVKP), and 95-97 (CAA) each bind NADP(+). Glu164 is a binding site for L-proline. Asn230 lines the NADPH pocket. L-proline is bound by residues Ala237 and Thr238. Ser278 bears the Phosphoserine mark. The disordered stretch occupies residues 292–320 (LDSPPGTSLAPSGHSKLLPRSMAPAGKQD).

Belongs to the pyrroline-5-carboxylate reductase family. Homodecamer; composed of 5 homodimers. Interacts with LTO1.

The protein localises to the mitochondrion. The catalysed reaction is L-proline + NADP(+) = (S)-1-pyrroline-5-carboxylate + NADPH + 2 H(+). It catalyses the reaction L-proline + NAD(+) = (S)-1-pyrroline-5-carboxylate + NADH + 2 H(+). It participates in amino-acid biosynthesis; L-proline biosynthesis; L-proline from L-glutamate 5-semialdehyde: step 1/1. In terms of biological role, oxidoreductase that catalyzes the last step in proline biosynthesis, which corresponds to the reduction of pyrroline-5-carboxylate to L-proline using NAD(P)H. At physiologic concentrations, has higher specific activity in the presence of NADH. Involved in the cellular response to oxidative stress. The chain is Pyrroline-5-carboxylate reductase 1, mitochondrial (PYCR1) from Bos taurus (Bovine).